A 275-amino-acid polypeptide reads, in one-letter code: MQNITDSWFVQGMIKATSDAWLKGWDERNGGNLTLRLDEADIAPFSADFHEKPRYITLSQLMPLLANTPFIVTGSGKFFRNVQLDPAANLGVVKIDSDGAGYHILWGLTHDAVPTSELPAHFLSHCERIKATHGKDRVIMHCHATNLIALTYVLENNTALITRKLWEGSTECLVVFPDGVGILPWMVPGPDEIGQATAQEMQKHSLVLWPFHGVFGSGPTLNETFGLIDTAEKSAEVLVKIYSMGGMKQTITREELVALGKRFGVTPLASAVELY.

The active site involves glutamate 117. Zn(2+) is bound by residues histidine 141, histidine 143, and histidine 212.

The protein belongs to the aldolase class II family. RhaD subfamily. In terms of assembly, homotetramer. Zn(2+) is required as a cofactor.

It is found in the cytoplasm. It carries out the reaction L-rhamnulose 1-phosphate = (S)-lactaldehyde + dihydroxyacetone phosphate. Its pathway is carbohydrate degradation; L-rhamnose degradation; glycerone phosphate from L-rhamnose: step 3/3. Functionally, catalyzes the reversible cleavage of L-rhamnulose-1-phosphate to dihydroxyacetone phosphate (DHAP) and L-lactaldehyde. This is Putative rhamnulose-1-phosphate aldolase from Salmonella typhi.